The primary structure comprises 917 residues: Phosphoenolpyruvate carboxylase (917 aa).

Active-site residues include histidine 145 and lysine 578.

Belongs to the PEPCase type 1 family. It depends on Mg(2+) as a cofactor.

It carries out the reaction oxaloacetate + phosphate = phosphoenolpyruvate + hydrogencarbonate. In terms of biological role, forms oxaloacetate, a four-carbon dicarboxylic acid source for the tricarboxylic acid cycle. In Azoarcus sp. (strain BH72), this protein is Phosphoenolpyruvate carboxylase.